The following is a 37-amino-acid chain: Small ribosomal subunit protein eS32 (37 aa).

The protein belongs to the eukaryotic ribosomal protein eS32 family. As to quaternary structure, part of the small ribosomal subunit.

Interacts with N(4)-acetylcytidine (ac(4)C) 1459 of the small rRNA; the acetyl group of ac(4)C1459 briges the interaction with this protein. This is Small ribosomal subunit protein eS32 (rpl41e) from Thermococcus kodakarensis (strain ATCC BAA-918 / JCM 12380 / KOD1) (Pyrococcus kodakaraensis (strain KOD1)).